A 153-amino-acid polypeptide reads, in one-letter code: ORM1-like protein 2 (153 aa).

Residues 1 to 21 are Cytoplasmic-facing; sequence MNVGVAHSEVNPNTRVMNSRG. 2 consecutive transmembrane segments (helical) span residues 22–42 and 43–63; these read IWLAYIILVGLLHVVLLSIPF and FSIPVVWTLTNVIHNLAMYIF. At 64–105 the chain is on the cytoplasmic side; sequence LHTVKGTPFETPDQGKARLLTHWEQMDYGLQFTSSRKFLSIS. The helical transmembrane segment at 106–126 threads the bilayer; it reads PIVLYLLASFYTKYDAAHFLI. Residues 127 to 153 are Extracellular-facing; that stretch reads NTASLLSVLLPKLPQFHGVRLFGINKY.

It belongs to the ORM family. In terms of assembly, ceramide-sensitive subunit of the serine palmitoyltransferase (SPT) complex, which is also composed of SPTLC1, SPTLC2/3 and SPTSSA/B.

It is found in the endoplasmic reticulum membrane. Functionally, plays an essential role in the homeostatic regulation of sphingolipid de novo biosynthesis by modulating the activity of the serine palmitoyltransferase (SPT) in response to ceramide levels. When complexed to SPT, the binding of ceramides to its N-terminus stabilizes a conformation that block SPT substrate entry, hence preventing SPT catalytic activity. Through this mechanism, maintains ceramide levels at sufficient concentrations for the production of complex sphingolipids, but which prevents the accumulation of ceramides to levels that trigger apoptosis. The polypeptide is ORM1-like protein 2 (Ormdl2) (Mus musculus (Mouse)).